The chain runs to 311 residues: Probable mitochondrial phosphate carrier protein (311 aa).

Over 1–23 (MSTPLIPPAPPKKTLQLYTPQYY) the chain is Mitochondrial intermembrane. 3 Solcar repeats span residues 21–105 (QYYG…FKHK), 118–203 (YRTS…IVEA), and 219–303 (EKIG…FKIM). The chain crosses the membrane as a helical span at residues 24-44 (GLCTLGGLLACGTTHSAITPL). Over 45–67 (DLIKCRKQVNPNIYPGNIAGFKT) the chain is Mitochondrial matrix. Residues 68-88 (ILSKEGLRGLYTGGMPTLIGY) form a helical membrane-spanning segment. Topologically, residues 89–120 (SLQGCGKYGFYELFKHKYSTLVGAQKAHEYRT) are mitochondrial intermembrane. Residues 121–141 (SIYLAASASAELLADIMLCPM) form a helical membrane-spanning segment. Residues 142–171 (EAIKVRVQTSNPRFANTTREAWSKIVTNEG) lie on the Mitochondrial matrix side of the membrane. The chain crosses the membrane as a helical span at residues 172 to 192 (FGTLYRGLAPLWFRQIPYTMM). Topologically, residues 193–220 (KFASFERIVEALYTYIGKPKNMYSKAEK) are mitochondrial intermembrane. Residues 221 to 241 (IGISFAGGYMAGVLCAIISHP) form a helical membrane-spanning segment. Over 242–269 (ADVMVSKLNSNKKAGEGAGAAAARIYKE) the chain is Mitochondrial matrix. A helical membrane pass occupies residues 270–290 (IGFSGLWNGLGVRIVMIGTLT). The Mitochondrial intermembrane segment spans residues 291–311 (GAQWLIYDSFKIMCGFPATGA).

The protein belongs to the mitochondrial carrier (TC 2.A.29) family.

The protein resides in the mitochondrion inner membrane. Transport of phosphate groups from the cytosol to the mitochondrial matrix. This Schizosaccharomyces pombe (strain 972 / ATCC 24843) (Fission yeast) protein is Probable mitochondrial phosphate carrier protein.